The primary structure comprises 211 residues: Methylthioribulose-1-phosphate dehydratase (211 aa).

The Zn(2+) site is built by His105 and His107.

This sequence belongs to the aldolase class II family. MtnB subfamily. The cofactor is Zn(2+).

The enzyme catalyses 5-(methylsulfanyl)-D-ribulose 1-phosphate = 5-methylsulfanyl-2,3-dioxopentyl phosphate + H2O. It functions in the pathway amino-acid biosynthesis; L-methionine biosynthesis via salvage pathway; L-methionine from S-methyl-5-thio-alpha-D-ribose 1-phosphate: step 2/6. In terms of biological role, catalyzes the dehydration of methylthioribulose-1-phosphate (MTRu-1-P) into 2,3-diketo-5-methylthiopentyl-1-phosphate (DK-MTP-1-P). The protein is Methylthioribulose-1-phosphate dehydratase of Acidiphilium cryptum (strain JF-5).